Reading from the N-terminus, the 132-residue chain is UPF0299 membrane protein KPN78578_25390 (132 aa).

The next 4 membrane-spanning stretches (helical) occupy residues 5–25 (LTII…LYAG), 38–60 (GSII…PQWV), 66–86 (ILIR…MQYW), and 93–113 (LGPV…VVSW).

It belongs to the UPF0299 family.

It localises to the cell inner membrane. This Klebsiella pneumoniae subsp. pneumoniae (strain ATCC 700721 / MGH 78578) protein is UPF0299 membrane protein KPN78578_25390.